Here is a 148-residue protein sequence, read N- to C-terminus: Snaclec B2 (148 aa).

The first 24 residues, 1–24 (MGRLISVSFGLLVVFLSLSGTGAA), serve as a signal peptide directing secretion. 3 cysteine pairs are disulfide-bonded: C27/C38, C55/C144, and C121/C136. A C-type lectin domain is found at 34 to 145 (YDQHCYKVFD…CRLLGHFVCK (112 aa)).

This sequence belongs to the snaclec family. Heterodimer; disulfide-linked. In terms of tissue distribution, expressed by the venom gland.

Its subcellular location is the secreted. Interferes with one step of hemostasis (modulation of platelet aggregation, or coagulation cascade, for example). This Macrovipera lebetinus (Levantine viper) protein is Snaclec B2.